Reading from the N-terminus, the 251-residue chain is Small ribosomal subunit protein uS3 (251 aa).

Positions 39-111 (IRELINNFSK…DVDLNILEVK (73 aa)) constitute a KH type-2 domain.

Belongs to the universal ribosomal protein uS3 family. Part of the 30S ribosomal subunit. Forms a tight complex with proteins S10 and S14.

In terms of biological role, binds the lower part of the 30S subunit head. Binds mRNA in the 70S ribosome, positioning it for translation. The protein is Small ribosomal subunit protein uS3 of Phytoplasma sp. (strain STRAWB1).